The chain runs to 335 residues: 2-acylglycerol O-acyltransferase 2-A (335 aa).

Helical transmembrane passes span 24–44 (WVFSFLALAQTCILLFFVLLF) and 47–67 (FWIISVVYGVWWFLDWDTPSK).

The protein belongs to the diacylglycerol acyltransferase family.

The protein resides in the endoplasmic reticulum membrane. The protein localises to the cytoplasm. Its subcellular location is the perinuclear region. It catalyses the reaction a 2-acylglycerol + an acyl-CoA = a 1,2-diacylglycerol + CoA. The enzyme catalyses a 2-acylglycerol + an acyl-CoA = a 1,2-diacyl-sn-glycerol + CoA. It carries out the reaction a 2-acylglycerol + an acyl-CoA = a 2,3-diacyl-sn-glycerol + CoA. The catalysed reaction is a 1-acylglycerol + an acyl-CoA = a 1,2-diacylglycerol + CoA. It catalyses the reaction a 1-acylglycerol + an acyl-CoA = a 1,3-diacylglycerol + CoA. The enzyme catalyses 1-O-alkylglycerol + an acyl-CoA = 1-O-alkyl-3-acylglycerol + CoA. It carries out the reaction an acyl-CoA + a 1,2-diacyl-sn-glycerol = a triacyl-sn-glycerol + CoA. Its pathway is glycerolipid metabolism; triacylglycerol biosynthesis. In terms of biological role, catalyzes the formation of diacylglycerol from 2-monoacylglycerol and fatty acyl-CoA. Involved in glycerolipid synthesis and lipid metabolism. Catalyzes the formation of diacylglycerol, the precursor of triacylglycerol, by transferring the acyl chain of a fatty acyl-CoA to a monoacylglycerol. Plays a central role in absorption of dietary fat in the small intestine by catalyzing the resynthesis of triacylglycerol in enterocytes. Has a preference toward monoacylglycerols containing unsaturated fatty acids in an order of C18:3 &gt; C18:2 &gt; C18:1 &gt; C18:0 at sn-2. Able to use 1-monoalkylglycerol (1-MAkG, 1-O-alkylglycerol) as an acyl acceptor for the synthesis of monoalkyl-monoacylglycerol (MAMAG, 1-O-alkyl-3-acylglycerol or 1-O-alkyl-2-acylglycerol) and subsequently, with lower efficiency, may add another acyl chain producing monoalkyl-diacylglycerol (MADAG, 1-O-alkyl-2,3-diacylglycerol). Possesses weak but significant activity with diacylglycerol as substrate, producing triacylglycerol (triacyl-sn-glycerol). The chain is 2-acylglycerol O-acyltransferase 2-A (mogat2-a) from Xenopus laevis (African clawed frog).